The sequence spans 481 residues: Probable autolysin LytO (481 aa).

In terms of domain architecture, Peptidase C51 spans 7 to 148 (KNEFIEWLKT…AYDFPMWFIR (142 aa)). Residues 155–165 (TAPRSVQSPTQ) show a composition bias toward polar residues. The interval 155–177 (TAPRSVQSPTQAPKKETAKPQPK) is disordered. In terms of domain architecture, N-acetylmuramoyl-L-alanine amidase spans 198-323 (SNPKGIVIHN…NEFTSTSCPH (126 aa)). The region spanning 398-466 (EESARFTNGN…YLPIRTWNGS (69 aa)) is the SH3b domain.

The protein belongs to the N-acetylmuramoyl-L-alanine amidase 2 family.

The catalysed reaction is Hydrolyzes the link between N-acetylmuramoyl residues and L-amino acid residues in certain cell-wall glycopeptides.. In terms of biological role, has weak lytic activity toward S.aureus cells. In Staphylococcus aureus (strain NCTC 8325 / PS 47), this protein is Probable autolysin LytO.